A 101-amino-acid polypeptide reads, in one-letter code: Protein Tat (101 aa).

The segment covering 1–12 (MEPVDPRLEPWK) has biased composition (basic and acidic residues). The segment at 1–20 (MEPVDPRLEPWKHPGSQPKT) is disordered. The interaction with human CREBBP stretch occupies residues 1–24 (MEPVDPRLEPWKHPGSQPKTACTT). Residues 1 to 48 (MEPVDPRLEPWKHPGSQPKTACTTCYCKKCCFHCQVCFTKKALGISYG) form a transactivation region. The Zn(2+) site is built by cysteine 22, cysteine 25, and cysteine 27. The segment at 22–37 (CTTCYCKKCCFHCQVC) is cysteine-rich. Lysine 28 carries the N6-acetyllysine; by host PCAF modification. Residues cysteine 30, histidine 33, cysteine 34, and cysteine 37 each coordinate Zn(2+). The segment at 38–48 (FTKKALGISYG) is core. Residues 47 to 101 (YGRKKRRQRRRAPEDSQTHQVSLPKQPAPQFRGDPTGPKESKKKVERETETHPVD) are disordered. Positions 49 to 57 (RKKRRQRRR) match the Nuclear localization signal, RNA-binding (TAR), and protein transduction motif. Positions 49–86 (RKKRRQRRRAPEDSQTHQVSLPKQPAPQFRGDPTGPKE) are interaction with the host capping enzyme RNGTT. N6-acetyllysine; by host EP300 and GCN5L2 is present on residues lysine 50 and lysine 51. An asymmetric dimethylarginine; by host PRMT6 mark is found at arginine 52 and arginine 53. Lysine 71 is covalently cross-linked (Glycyl lysine isopeptide (Lys-Gly) (interchain with G-Cter in ubiquitin)). The Cell attachment site motif lies at 78 to 80 (RGD). The segment covering 83–101 (GPKESKKKVERETETHPVD) has biased composition (basic and acidic residues).

The protein belongs to the lentiviruses Tat family. In terms of assembly, interacts with host CCNT1. Associates with the P-TEFb complex composed at least of Tat, P-TEFb (CDK9 and CCNT1), TAR RNA, RNA Pol II. Recruits the HATs CREBBP, TAF1/TFIID, EP300, PCAF and GCN5L2. Interacts with host KAT5/Tip60; this interaction targets the latter to degradation. Interacts with the host deacetylase SIRT1. Interacts with host capping enzyme RNGTT; this interaction stimulates RNGTT. Binds to host KDR, and to the host integrins ITGAV/ITGB3 and ITGA5/ITGB1. Interacts with host KPNB1/importin beta-1 without previous binding to KPNA1/importin alpha-1. Interacts with EIF2AK2. Interacts with host nucleosome assembly protein NAP1L1; this interaction may be required for the transport of Tat within the nucleus, since the two proteins interact at the nuclear rim. Interacts with host C1QBP/SF2P32; this interaction involves lysine-acetylated Tat. Interacts with the host chemokine receptors CCR2, CCR3 and CXCR4. Interacts with host DPP4/CD26; this interaction may trigger an anti-proliferative effect. Interacts with host LDLR. Interacts with the host extracellular matrix metalloproteinase MMP1. Interacts with host PRMT6; this interaction mediates Tat's methylation. Interacts with, and is ubiquitinated by MDM2/Hdm2. Interacts with host PSMC3 and HTATIP2. Interacts with STAB1; this interaction may overcome SATB1-mediated repression of IL2 and IL2RA (interleukin) in T cells by binding to the same domain than HDAC1. Interacts (when acetylated) with human CDK13, thereby increasing HIV-1 mRNA splicing and promoting the production of the doubly spliced HIV-1 protein Nef. Interacts with host TBP; this interaction modulates the activity of transcriptional pre-initiation complex. Interacts with host RELA. Interacts with host PLSCR1; this interaction negatively regulates Tat transactivation activity by altering its subcellular distribution. Post-translationally, asymmetrical arginine methylation by host PRMT6 seems to diminish the transactivation capacity of Tat and affects the interaction with host CCNT1. Acetylation by EP300, CREBBP, GCN5L2/GCN5 and PCAF regulates the transactivation activity of Tat. EP300-mediated acetylation of Lys-50 promotes dissociation of Tat from the TAR RNA through the competitive binding to PCAF's bromodomain. In addition, the non-acetylated Tat's N-terminus can also interact with PCAF. PCAF-mediated acetylation of Lys-28 enhances Tat's binding to CCNT1. Lys-50 is deacetylated by SIRT1. In terms of processing, polyubiquitination by host MDM2 does not target Tat to degradation, but activates its transactivation function and fosters interaction with CCNT1 and TAR RNA. Post-translationally, phosphorylated by EIF2AK2 on serine and threonine residues adjacent to the basic region important for TAR RNA binding and function. Phosphorylation of Tat by EIF2AK2 is dependent on the prior activation of EIF2AK2 by dsRNA.

The protein localises to the host nucleus. It localises to the host nucleolus. It is found in the host cytoplasm. Its subcellular location is the secreted. In terms of biological role, transcriptional activator that increases RNA Pol II processivity, thereby increasing the level of full-length viral transcripts. Recognizes a hairpin structure at the 5'-LTR of the nascent viral mRNAs referred to as the transactivation responsive RNA element (TAR) and recruits the cyclin T1-CDK9 complex (P-TEFb complex) that will in turn hyperphosphorylate the RNA polymerase II to allow efficient elongation. The CDK9 component of P-TEFb and other Tat-activated kinases hyperphosphorylate the C-terminus of RNA Pol II that becomes stabilized and much more processive. Other factors such as HTATSF1/Tat-SF1, SUPT5H/SPT5, and HTATIP2 are also important for Tat's function. Besides its effect on RNA Pol II processivity, Tat induces chromatin remodeling of proviral genes by recruiting the histone acetyltransferases (HATs) CREBBP, EP300 and PCAF to the chromatin. This also contributes to the increase in proviral transcription rate, especially when the provirus integrates in transcriptionally silent region of the host genome. To ensure maximal activation of the LTR, Tat mediates nuclear translocation of NF-kappa-B by interacting with host RELA. Through its interaction with host TBP, Tat may also modulate transcription initiation. Tat can reactivate a latently infected cell by penetrating in it and transactivating its LTR promoter. In the cytoplasm, Tat is thought to act as a translational activator of HIV-1 mRNAs. Extracellular circulating Tat can be endocytosed by surrounding uninfected cells via the binding to several surface receptors such as CD26, CXCR4, heparan sulfate proteoglycans (HSPG) or LDLR. Neurons are rarely infected, but they internalize Tat via their LDLR. Through its interaction with nuclear HATs, Tat is potentially able to control the acetylation-dependent cellular gene expression. Modulates the expression of many cellular genes involved in cell survival, proliferation or in coding for cytokines or cytokine receptors. Tat plays a role in T-cell and neurons apoptosis. Tat induced neurotoxicity and apoptosis probably contribute to neuroAIDS. Circulating Tat also acts as a chemokine-like and/or growth factor-like molecule that binds to specific receptors on the surface of the cells, affecting many cellular pathways. In the vascular system, Tat binds to ITGAV/ITGB3 and ITGA5/ITGB1 integrins dimers at the surface of endothelial cells and competes with bFGF for heparin-binding sites, leading to an excess of soluble bFGF. The chain is Protein Tat from Human immunodeficiency virus type 1 group M subtype B (isolate MN) (HIV-1).